Reading from the N-terminus, the 614-residue chain is Sodium- and chloride-dependent betaine transporter (614 aa).

The Cytoplasmic portion of the chain corresponds to 1 to 44 (MDRKVAVHEDGYPVVSWVPEEGEMMDQKGKDQVKDRGQWTNKME). Transmembrane regions (helical) follow at residues 45–65 (FVLSVAGEIIGLGNVWRFPYL), 73–92 (AFFIPYFIFFFSCGIPVFFL), and 117–137 (GIGMASVVIESYLNIYYIIIL). Residues 138 to 210 (AWALFYLFSS…SGIHDLGSLR (73 aa)) lie on the Extracellular side of the membrane. Cys157 and Cys166 are joined by a disulfide. N-linked (GlcNAc...) asparagine glycans are attached at residues Asn171 and Asn183. A run of 9 helical transmembrane segments spans residues 211–229 (WELALCLLLAWIICYFCIW), 238–255 (VVYFTATFPYLMLIILLI), 291–308 (IFFSFAICQGCLTALGSY), 320–341 (IALCFLNSATSFVAGFVVFSIL), 374–393 (MPLSQLWSCLFFIMLLFLGL), 423–441 (VLILAISVLCYLMGLLLVT), 458–478 (GICLLFLSLFEVICIGWVYGA), 499–518 (ISWLFLTPGLCLATFFFSLS), and 538–556 (IGWLLAFSSMACVPLFIII). Topologically, residues 557-614 (TFLKTQGSFKKRLRRLITPDPSLPQPGRRPPQDGSSAQNCSSSPAKQELIAWEKETHL) are cytoplasmic. The tract at residues 574-602 (TPDPSLPQPGRRPPQDGSSAQNCSSSPAK) is disordered. A compositionally biased stretch (polar residues) spans 589–601 (DGSSAQNCSSSPA).

The protein belongs to the sodium:neurotransmitter symporter (SNF) (TC 2.A.22) family. SLC6A12 subfamily. As to quaternary structure, interacts with LIN7C. As to expression, predominantly expressed in the liver (sinusoidal hepatocyte plasma membranes), also present in the renal medulla, where it localizes to the basolateral membranes of collecting ducts (particularly at the papilla tip) and the thick ascending limbs of Henle (at protein level). Some expression is detected in the leptomeninges, but no expression is detected in brain parenchyma, brain blood vessels, ependymal cells, the renal cortex and the intestine.

Its subcellular location is the basolateral cell membrane. It is found in the cell membrane. It carries out the reaction 4-aminobutanoate(out) + chloride(out) + 3 Na(+)(out) = 4-aminobutanoate(in) + chloride(in) + 3 Na(+)(in). It catalyses the reaction glycine betaine(out) + 2 chloride(out) + 3 Na(+)(out) = glycine betaine(in) + 2 chloride(in) + 3 Na(+)(in). Its function is as follows. Transporter that mediates cellular uptake of betaine and GABA in a sodium- and chloride-dependent process. May have a role in regulation of GABAergic transmission in the brain through the reuptake of GABA into presynaptic terminals, as well as in osmotic regulation. Probably also involved in renal and hepatic osmotic regulation. In Mus musculus (Mouse), this protein is Sodium- and chloride-dependent betaine transporter (Slc6a12).